A 731-amino-acid polypeptide reads, in one-letter code: Alpha-1,4-glucan:maltose-1-phosphate maltosyltransferase (731 aa).

Positions 1–10 (MEAQHNETEA) are enriched in basic and acidic residues. Residues 1 to 31 (MEAQHNETEAAGKPAAKKTTRTRKPRASKQA) form a disordered region. Basic residues predominate over residues 15–27 (AAKKTTRTRKPRA). Residues lysine 321, glutamine 381, and aspartate 416 each coordinate alpha-maltose 1-phosphate. The active-site Nucleophile is the aspartate 451. Asparagine 452 provides a ligand contact to alpha-maltose 1-phosphate. Residue glutamate 480 is the Proton donor of the active site. Residue 590 to 591 (KF) coordinates alpha-maltose 1-phosphate.

It belongs to the glycosyl hydrolase 13 family. GlgE subfamily. Homodimer.

The enzyme catalyses alpha-maltose 1-phosphate + [(1-&gt;4)-alpha-D-glucosyl](n) = [(1-&gt;4)-alpha-D-glucosyl](n+2) + phosphate. Its function is as follows. Maltosyltransferase that uses maltose 1-phosphate (M1P) as the sugar donor to elongate linear or branched alpha-(1-&gt;4)-glucans. Is involved in a branched alpha-glucan biosynthetic pathway from trehalose, together with TreS, Mak and GlgB. This chain is Alpha-1,4-glucan:maltose-1-phosphate maltosyltransferase, found in Bifidobacterium animalis subsp. lactis (strain Bl-04 / DGCC2908 / RB 4825 / SD5219).